The primary structure comprises 65 residues: Sarcoplasmic/endoplasmic reticulum calcium ATPase regulator ARLN (65 aa).

The residue at position 1 (M1) is an N-acetylmethionine. Positions 1 to 38 are disordered; sequence MEVGQAASGTDGVRERRGSSAARRRSQDEPVQSGMNGI. S19 and S26 each carry phosphoserine. The helical transmembrane segment at 44–64 threads the bilayer; that stretch reads WLDLWLFILFDLALFIFVYLL.

As to quaternary structure, homooligomer. Can also form heterooligomers with other sarcoplasmic/endoplasmic reticulum calcium ATPase (SERCA) regulators ERLN, PLN, SLN and STRIT1/DWORF. Monomer. Interacts as a monomer with ATP2A2/SERCA2; the interaction results in inhibition of ATP2A2 Ca(2+) affinity.

It is found in the endoplasmic reticulum membrane. Inhibits the activity of the calcium ATPases ATP2A2/SERCA2 and ATP2A3/SERCA3 by decreasing their apparent affinity for Ca(2+). This chain is Sarcoplasmic/endoplasmic reticulum calcium ATPase regulator ARLN (Arln), found in Rattus norvegicus (Rat).